Reading from the N-terminus, the 38-residue chain is Large ribosomal subunit protein bL36 (38 aa).

It belongs to the bacterial ribosomal protein bL36 family.

The protein is Large ribosomal subunit protein bL36 of Cupriavidus metallidurans (strain ATCC 43123 / DSM 2839 / NBRC 102507 / CH34) (Ralstonia metallidurans).